The sequence spans 249 residues: MASQRISNEPAYVLHRYDWSESSLILDVFTRHHGRVALVARGAKKPSSSFRPILLPLQPLHVAFGGDAEIRNLKSAEWQGGHVMPSGDALLSGYYLNELLMRLLARDDPHPLLFDAYAATVQLLASQNPDTLQLALRAFELRLLQGIGLLPRLDAETATLTPLAPHQRYVLVAEAGLRQAHDDDRFSLSGAQWQALQQALGGKSLFSDTLQACVACANELKIQLRALLHYHCGVRVLKTRQMMMDLQAL.

Belongs to the RecO family.

Its function is as follows. Involved in DNA repair and RecF pathway recombination. This Polaromonas naphthalenivorans (strain CJ2) protein is DNA repair protein RecO.